The following is a 134-amino-acid chain: Ribosome-binding factor A (134 aa).

This sequence belongs to the RbfA family. In terms of assembly, monomer. Binds 30S ribosomal subunits, but not 50S ribosomal subunits or 70S ribosomes.

The protein resides in the cytoplasm. Functionally, one of several proteins that assist in the late maturation steps of the functional core of the 30S ribosomal subunit. Associates with free 30S ribosomal subunits (but not with 30S subunits that are part of 70S ribosomes or polysomes). Required for efficient processing of 16S rRNA. May interact with the 5'-terminal helix region of 16S rRNA. This chain is Ribosome-binding factor A, found in Parasynechococcus marenigrum (strain WH8102).